The chain runs to 415 residues: Histidine--tRNA ligase (415 aa).

Belongs to the class-II aminoacyl-tRNA synthetase family. Homodimer.

Its subcellular location is the cytoplasm. The enzyme catalyses tRNA(His) + L-histidine + ATP = L-histidyl-tRNA(His) + AMP + diphosphate + H(+). In Clostridium botulinum (strain Okra / Type B1), this protein is Histidine--tRNA ligase.